Reading from the N-terminus, the 81-residue chain is Large ribosomal subunit protein bL31 (81 aa).

The protein belongs to the bacterial ribosomal protein bL31 family. Type A subfamily. As to quaternary structure, part of the 50S ribosomal subunit.

Functionally, binds the 23S rRNA. The sequence is that of Large ribosomal subunit protein bL31 (rpmE) from Fusobacterium nucleatum subsp. nucleatum (strain ATCC 25586 / DSM 15643 / BCRC 10681 / CIP 101130 / JCM 8532 / KCTC 2640 / LMG 13131 / VPI 4355).